Consider the following 508-residue polypeptide: GMP synthase [glutamine-hydrolyzing] (508 aa).

Residues methionine 1–threonine 189 enclose the Glutamine amidotransferase type-1 domain. Cysteine 78 functions as the Nucleophile in the catalytic mechanism. Active-site residues include histidine 163 and glutamate 165. The region spanning tryptophan 190 to arginine 383 is the GMPS ATP-PPase domain. An ATP-binding site is contributed by serine 217–threonine 223.

In terms of assembly, homodimer.

The catalysed reaction is XMP + L-glutamine + ATP + H2O = GMP + L-glutamate + AMP + diphosphate + 2 H(+). The protein operates within purine metabolism; GMP biosynthesis; GMP from XMP (L-Gln route): step 1/1. Its function is as follows. Catalyzes the synthesis of GMP from XMP. The sequence is that of GMP synthase [glutamine-hydrolyzing] from Helicobacter pylori (strain Shi470).